The sequence spans 956 residues: RNA-binding protein 44 (956 aa).

Residues 301–321 (DNTQNNQNQSYNPTEENDHNV) are disordered. The RRM domain occupies 750–824 (SLLCITCLPG…HAVQVVHLSG (75 aa)). The segment at 831–855 (KPSDLSHSASESHKEDTAGDELRTK) is disordered. The segment covering 840-854 (SESHKEDTAGDELRT) has biased composition (basic and acidic residues).

The protein localises to the cytoplasm. Its function is as follows. Component of intercellular bridges during meiosis. Intercellular bridges are evolutionarily conserved structures that connect differentiating germ cells. Not required for fertility. This is RNA-binding protein 44 (rbm44) from Danio rerio (Zebrafish).